A 153-amino-acid chain; its full sequence is uncharacterized protein (153 aa).

Transmembrane regions (helical) follow at residues 17 to 37, 44 to 64, and 118 to 138; these read ITLI…SMFF, FLLC…IGMG, and FVFI…TLII.

To M.jannaschii MJ0129 and MJ0554.

It is found in the cell membrane. This is an uncharacterized protein from Methanocaldococcus jannaschii (strain ATCC 43067 / DSM 2661 / JAL-1 / JCM 10045 / NBRC 100440) (Methanococcus jannaschii).